The primary structure comprises 347 residues: TEGPDFYIPMVNTTGVVRSPYEYPQYYLVNPAAFAVLGAYMFFLIIIGFPINFLTLYVTLEHKKLRTPLNYILLNLAVADLFMVIGGFTTTMYSSMHGYFVLGRLGCNIEGFFATLGGMISLWSLAVLAIERWVVVCKPISNFRFGENHAIMGVSLTWVMALACTVPPLVGWSRYIPEGMQCACGIDYYTRAEGYNNESFVIYMFTFHFLFPMFIIFFCYGRLLCAVKEAAAAQQESETTQRAEREVTRMVILMVIGYLVCWLPYASVAWFIFTHKGSEFGPLFMAVPSFFAKSSSIYNPIIYICMNKQFRQCMITTLFCGKNPFEGQEEDSSTKTEASSASSVSPA.

The Extracellular portion of the chain corresponds to 1–33 (TEGPDFYIPMVNTTGVVRSPYEYPQYYLVNPAA). Asn-12 carries an N-linked (GlcNAc...) asparagine glycan. The chain crosses the membrane as a helical span at residues 34–58 (FAVLGAYMFFLIIIGFPINFLTLYV). Residues 59–70 (TLEHKKLRTPLN) are Cytoplasmic-facing. Residues 71–93 (YILLNLAVADLFMVIGGFTTTMY) traverse the membrane as a helical segment. Residues 94-107 (SSMHGYFVLGRLGC) are Extracellular-facing. Residues Cys-107 and Cys-184 are joined by a disulfide bond. A helical membrane pass occupies residues 108–130 (NIEGFFATLGGMISLWSLAVLAI). Positions 131 to 133 (ERW) match the 'Ionic lock' involved in activated form stabilization motif. At 131–149 (ERWVVVCKPISNFRFGENH) the chain is on the cytoplasmic side. Residues 150–170 (AIMGVSLTWVMALACTVPPLV) traverse the membrane as a helical segment. Residues 171-199 (GWSRYIPEGMQCACGIDYYTRAEGYNNES) lie on the Extracellular side of the membrane. N-linked (GlcNAc...) asparagine glycosylation is present at Asn-197. Residues 200–221 (FVIYMFTFHFLFPMFIIFFCYG) traverse the membrane as a helical segment. At 222–249 (RLLCAVKEAAAAQQESETTQRAEREVTR) the chain is on the cytoplasmic side. The chain crosses the membrane as a helical span at residues 250–271 (MVILMVIGYLVCWLPYASVAWF). The Extracellular segment spans residues 272–283 (IFTHKGSEFGPL). Residues 284–305 (FMAVPSFFAKSSSIYNPIIYIC) form a helical membrane-spanning segment. Lys-293 carries the N6-(retinylidene)lysine modification. The Cytoplasmic segment spans residues 306–347 (MNKQFRQCMITTLFCGKNPFEGQEEDSSTKTEASSASSVSPA). Residue Cys-320 is the site of S-palmitoyl cysteine attachment. The interval 326 to 347 (EGQEEDSSTKTEASSASSVSPA) is disordered. The span at 335-347 (KTEASSASSVSPA) shows a compositional bias: low complexity.

This sequence belongs to the G-protein coupled receptor 1 family. Opsin subfamily. Phosphorylated on some or all of the serine and threonine residues present in the C-terminal region. Post-translationally, contains one covalently linked retinal chromophore.

Its subcellular location is the membrane. It is found in the cell projection. The protein localises to the cilium. It localises to the photoreceptor outer segment. Functionally, photoreceptor required for image-forming vision at low light intensity. While most salt water fish species use retinal as chromophore, most freshwater fish use 3-dehydroretinal, or a mixture of retinal and 3-dehydroretinal. Light-induced isomerization of 11-cis to all-trans retinal triggers a conformational change that activates signaling via G-proteins. Subsequent receptor phosphorylation mediates displacement of the bound G-protein alpha subunit by arrestin and terminates signaling. This is Rhodopsin (rho) from Sargocentron tiere (Blue lined squirrelfish).